Reading from the N-terminus, the 333-residue chain is Beta-ketoacyl-[acyl-carrier-protein] synthase III (333 aa).

Active-site residues include C116 and H258. Residues 259 to 263 (QANQR) form an ACP-binding region. N288 is a catalytic residue.

Belongs to the thiolase-like superfamily. FabH family. In terms of assembly, homodimer.

It localises to the cytoplasm. The catalysed reaction is malonyl-[ACP] + acetyl-CoA + H(+) = 3-oxobutanoyl-[ACP] + CO2 + CoA. It functions in the pathway lipid metabolism; fatty acid biosynthesis. Catalyzes the condensation reaction of fatty acid synthesis by the addition to an acyl acceptor of two carbons from malonyl-ACP. Catalyzes the first condensation reaction which initiates fatty acid synthesis and may therefore play a role in governing the total rate of fatty acid production. Possesses both acetoacetyl-ACP synthase and acetyl transacylase activities. Its substrate specificity determines the biosynthesis of branched-chain and/or straight-chain of fatty acids. The sequence is that of Beta-ketoacyl-[acyl-carrier-protein] synthase III from Microcystis aeruginosa (strain NIES-843 / IAM M-2473).